The primary structure comprises 717 residues: Homeobox protein araucan (717 aa).

Disordered regions lie at residues 46–80 (APAM…PNAL), 94–130 (GGSS…GGGG), 317–371 (NKMT…AIDE), 395–418 (SGGY…YHHQ), 478–516 (TPPP…AGRD), 549–615 (TNNS…ASQR), and 675–717 (ARLG…KFTN). Positions 94-103 (GGSSAGGGGP) are enriched in gly residues. The segment at residues 255-317 (LAARRKNATR…NARRRLKKEN (63 aa)) is a DNA-binding region (homeobox; TALE-type). The segment covering 317–327 (NKMTWEPKNRT) has biased composition (basic and acidic residues). Serine 336 bears the Phosphoserine mark. Positions 337–347 (DDEKDKEDLEP) are enriched in basic and acidic residues. Gly residues predominate over residues 395–410 (SGGYPGGGGSSSGHPG). 4 stretches are compositionally biased toward low complexity: residues 492-507 (QQQQ…AQHQ), 559-589 (PPQQ…GPII), 599-614 (QQQQ…TASQ), and 687-698 (SSGNSSSSSSSS).

Belongs to the TALE/IRO homeobox family.

Its subcellular location is the nucleus. Functionally, controls proneural and vein forming genes. Positive transcriptional controller of AC-SC (achaete-scute). May act as an activator that interacts with the transcriptional complex assembled on the AC and SC promoters and participates in transcription initiation. The chain is Homeobox protein araucan (ara) from Drosophila melanogaster (Fruit fly).